Consider the following 581-residue polypeptide: Arginine--tRNA ligase (581 aa).

The 'HIGH' region signature appears at Pro-126–His-136.

It belongs to the class-I aminoacyl-tRNA synthetase family. Monomer.

It localises to the cytoplasm. The enzyme catalyses tRNA(Arg) + L-arginine + ATP = L-arginyl-tRNA(Arg) + AMP + diphosphate. This chain is Arginine--tRNA ligase, found in Shewanella sp. (strain MR-7).